The primary structure comprises 1207 residues: Chromosomal serine/threonine-protein kinase JIL-1 (1207 aa).

Polar residues predominate over residues 1–19 (MSRLQKQNYEILSGTSTSR). 3 disordered regions span residues 1 to 119 (MSRL…ASAR), 164 to 183 (QDMEEDEPNGIEIDESSSSL), and 210 to 230 (SSSTTPSYAMPTSNSTPLDLD). Phosphoserine occurs at positions 29 and 31. A compositionally biased stretch (polar residues) spans 45–69 (LNGQLVANGNGKTRKNSNSETMTNG). A compositionally biased stretch (low complexity) spans 88–97 (NYNNNNNNNN). Positions 98 to 108 (SISATNGQYTN) are enriched in polar residues. Positions 109 to 118 (SSSKTTSASA) are enriched in low complexity. Residues 164-178 (QDMEEDEPNGIEIDE) show a composition bias toward acidic residues. The span at 213–226 (TTPSYAMPTSNSTP) shows a compositional bias: polar residues. The region spanning 261-530 (FKIIRVLGTG…ASEIKEHPFF (270 aa)) is the Protein kinase 1 domain. ATP-binding positions include 267–275 (LGTGAYGRV) and Lys-293. Asp-389 serves as the catalytic Proton acceptor. At Ser-424 the chain carries Phosphoserine. The AGC-kinase C-terminal domain maps to 531-599 (NGINWQELRT…VAPEHLEQMR (69 aa)). A Phosphothreonine modification is found at Thr-588. The region spanning 623–886 (LELGTRTSNG…LSDILDSEWL (264 aa)) is the Protein kinase 2 domain. ATP is bound by residues 629 to 637 (TSNGAYGTC) and Lys-652. The active-site Proton acceptor is Asp-739. Phosphothreonine is present on Thr-1045. Ser-1047 carries the post-translational modification Phosphoserine. Residues 1168-1197 (TFPRPKAQLKRTKREPKVPRPPTRVQPERA) are disordered.

Belongs to the protein kinase superfamily. Ser/Thr protein kinase family. Interacts with lola. Interacts with proteins of the male specific lethal (MSL) dosage compensation complex; this interaction is mediated by the kinase domains. It depends on Mg(2+) as a cofactor. In terms of processing, autophosphorylated in vitro.

The protein resides in the nucleus. It localises to the chromosome. The catalysed reaction is L-seryl-[protein] + ATP = O-phospho-L-seryl-[protein] + ADP + H(+). It carries out the reaction L-threonyl-[protein] + ATP = O-phospho-L-threonyl-[protein] + ADP + H(+). Functionally, phosphorylates 'Ser-10' of histone H3. May regulate gene expression by establishing or maintaining the structure of more open chromatin regions. Also required for normal polytene chromosome structure, for oogenesis and for viability throughout development. Regulates the structure of polytene chromosomes in salivary glands. May phosphorylate 'Ser-1' of histone H2A. The sequence is that of Chromosomal serine/threonine-protein kinase JIL-1 from Drosophila melanogaster (Fruit fly).